A 249-amino-acid chain; its full sequence is ATP synthase subunit a, chloroplastic (249 aa).

The next 5 membrane-spanning stretches (helical) occupy residues 40-60, 97-117, 136-156, 201-221, and 222-242; these read QVLI…IVAV, VPFI…GALL, INTT…AGLS, LVVV…VMFL, and GLFT…AYIG.

Belongs to the ATPase A chain family. As to quaternary structure, F-type ATPases have 2 components, CF(1) - the catalytic core - and CF(0) - the membrane proton channel. CF(1) has five subunits: alpha(3), beta(3), gamma(1), delta(1), epsilon(1). CF(0) has four main subunits: a, b, b' and c.

It localises to the plastid. The protein localises to the chloroplast thylakoid membrane. Its function is as follows. Key component of the proton channel; it plays a direct role in the translocation of protons across the membrane. This chain is ATP synthase subunit a, chloroplastic, found in Manihot esculenta (Cassava).